Here is a 142-residue protein sequence, read N- to C-terminus: Photosystem II extrinsic protein U (142 aa).

Positions 1–29 (MKGLVRLLTVFSLLLGCWGWLGTTQIAQA) are cleaved as a signal peptide.

This sequence belongs to the PsbU family. In terms of assembly, PSII is composed of 1 copy each of membrane proteins PsbA, PsbB, PsbC, PsbD, PsbE, PsbF, PsbH, PsbI, PsbJ, PsbK, PsbL, PsbM, PsbT, PsbX, PsbY, PsbZ, Psb30/Ycf12, peripheral proteins PsbO, CyanoQ (PsbQ), PsbU, PsbV and a large number of cofactors. It forms dimeric complexes.

The protein localises to the cellular thylakoid membrane. In terms of biological role, one of the extrinsic, lumenal subunits of photosystem II (PSII). PSII is a light-driven water plastoquinone oxidoreductase, using light energy to abstract electrons from H(2)O, generating a proton gradient subsequently used for ATP formation. The extrinsic proteins stabilize the structure of photosystem II oxygen-evolving complex (OEC), the ion environment of oxygen evolution and protect the OEC against heat-induced inactivation. In Trichormus variabilis (strain ATCC 29413 / PCC 7937) (Anabaena variabilis), this protein is Photosystem II extrinsic protein U.